A 58-amino-acid polypeptide reads, in one-letter code: Large ribosomal subunit protein uL30 (58 aa).

This sequence belongs to the universal ribosomal protein uL30 family. Part of the 50S ribosomal subunit.

This is Large ribosomal subunit protein uL30 from Acinetobacter baumannii (strain AB307-0294).